The following is a 396-amino-acid chain: Phosphoglycerate kinase (396 aa).

Substrate-binding positions include 21–23 (DFN), Arg36, 59–62 (HLGR), Arg118, and Arg151. ATP is bound by residues Lys201, Gly292, Glu323, and 349-352 (GGDS).

This sequence belongs to the phosphoglycerate kinase family. Monomer.

The protein localises to the cytoplasm. The catalysed reaction is (2R)-3-phosphoglycerate + ATP = (2R)-3-phospho-glyceroyl phosphate + ADP. It functions in the pathway carbohydrate degradation; glycolysis; pyruvate from D-glyceraldehyde 3-phosphate: step 2/5. The chain is Phosphoglycerate kinase from Leptospira interrogans serogroup Icterohaemorrhagiae serovar Lai (strain 56601).